Reading from the N-terminus, the 134-residue chain is uncharacterized protein (134 aa).

Transmembrane regions (helical) follow at residues Val-49 to Val-69 and Leu-71 to Val-91.

The protein localises to the cell membrane. This is an uncharacterized protein from Mycobacterium tuberculosis (strain ATCC 25618 / H37Rv).